Reading from the N-terminus, the 317-residue chain is Transmembrane and death domain protein 1 (317 aa).

The first 27 residues, 1-27, serve as a signal peptide directing secretion; the sequence is MAARTLASALVLTLWVWALAPAGAVDA. At 28–218 the chain is on the extracellular side; sequence MGPHAAVRLA…ERSPMGWAGP (191 aa). Over residues 62 to 73 the composition is skewed to basic and acidic residues; the sequence is ELSRLSEDRLAR. The disordered stretch occupies residues 62–106; the sequence is ELSRLSEDRLARPEPLNTTSGSPSRRRRREAAEDPAGRVAGPGEV. Residues 66 to 150 form the Death domain; sequence LSEDRLARPE…DVARELGKNL (85 aa). The N-linked (GlcNAc...) asparagine glycan is linked to N78. A helical membrane pass occupies residues 219–239; sequence LALGLLTGFVGALGTGALVVL. Residues 240–317 lie on the Cytoplasmic side of the membrane; that stretch reads LTLWITGGDG…SWGSGALDGL (78 aa).

Its subcellular location is the membrane. In Homo sapiens (Human), this protein is Transmembrane and death domain protein 1.